We begin with the raw amino-acid sequence, 877 residues long: (E,E)-geranyllinalool synthase (877 aa).

Residues aspartate 540 and aspartate 544 each contribute to the Mg(2+) site. Substrate is bound by residues aspartate 540, aspartate 544, arginine 677, and asparagine 680. A DDXXD motif motif is present at residues 540 to 544 (DDFFD). Mg(2+)-binding residues include asparagine 680, serine 684, and glutamate 688.

The protein belongs to the terpene synthase family. Tpsf subfamily. The cofactor is Mg(2+). Mn(2+) serves as cofactor. In terms of tissue distribution, expressed in leaves and flowers.

The protein resides in the cytoplasm. The catalysed reaction is (2E,6E,10E)-geranylgeranyl diphosphate + H2O = (6E,10E)-geranyllinalool + diphosphate. Its pathway is secondary metabolite biosynthesis; terpenoid biosynthesis. Functionally, involved in the biosynthesis of homoterpenes, attractants of herbivores parasitoids and predators (e.g. predatory mites and parasitoid wasps). Involved in diterpene (C20) biosynthesis. Catalyzes the conversion of geranylgeranyl diphosphate to (E,E)-geranyllinalool, the precursor of the insect-induced volatile C16-homoterpene TMTT. The sequence is that of (E,E)-geranyllinalool synthase from Arabidopsis thaliana (Mouse-ear cress).